We begin with the raw amino-acid sequence, 484 residues long: UDP-N-acetylmuramoyl-L-alanyl-D-glutamate--2,6-diaminopimelate ligase (484 aa).

Position 30 (S30) interacts with UDP-N-acetyl-alpha-D-muramoyl-L-alanyl-D-glutamate. 109 to 115 (GTNGKTS) contributes to the ATP binding site. UDP-N-acetyl-alpha-D-muramoyl-L-alanyl-D-glutamate is bound by residues 151-152 (TT), S178, and R186. K218 carries the N6-carboxylysine modification. Residues R379, 403 to 406 (DNPR), G455, and E459 each bind meso-2,6-diaminopimelate. The Meso-diaminopimelate recognition motif signature appears at 403–406 (DNPR).

It belongs to the MurCDEF family. MurE subfamily. Mg(2+) serves as cofactor. In terms of processing, carboxylation is probably crucial for Mg(2+) binding and, consequently, for the gamma-phosphate positioning of ATP.

It localises to the cytoplasm. The enzyme catalyses UDP-N-acetyl-alpha-D-muramoyl-L-alanyl-D-glutamate + meso-2,6-diaminopimelate + ATP = UDP-N-acetyl-alpha-D-muramoyl-L-alanyl-gamma-D-glutamyl-meso-2,6-diaminopimelate + ADP + phosphate + H(+). The protein operates within cell wall biogenesis; peptidoglycan biosynthesis. Functionally, catalyzes the addition of meso-diaminopimelic acid to the nucleotide precursor UDP-N-acetylmuramoyl-L-alanyl-D-glutamate (UMAG) in the biosynthesis of bacterial cell-wall peptidoglycan. This chain is UDP-N-acetylmuramoyl-L-alanyl-D-glutamate--2,6-diaminopimelate ligase, found in Clostridioides difficile (strain 630) (Peptoclostridium difficile).